The chain runs to 1142 residues: Melanoma-associated antigen C1 (1142 aa).

The tract at residues 1-132 (MGDKDMPTAG…DVQSPLQNPA (132 aa)) is disordered. The segment covering 13–42 (SLLQSSSESPQSCPEGEDSQSPLQIPQSSP) has biased composition (low complexity). A Phosphoserine modification is found at serine 63. The span at 76–87 (SQSPLQIPQSSP) shows a compositional bias: low complexity. Positions 92–103 (TQSPLQNSQSSP) are enriched in polar residues. Residues serine 207 and serine 382 each carry the phosphoserine modification. Disordered regions lie at residues 502 to 778 (TQST…LQRP) and 791 to 893 (LQSS…SLTD). A compositionally biased stretch (polar residues) spans 614–626 (SPLQGEEFQSSLQ). The segment covering 627-659 (SPVSICSSSTPSSLPQSFPESSQSPPEGPVQSP) has biased composition (low complexity). Residues 671 to 680 (HSQSPLQSPE) are compositionally biased toward polar residues. Composition is skewed to low complexity over residues 741 to 762 (QSPV…FPES) and 807 to 889 (QSPL…LESD). The region spanning 908-1106 (LDEKVDELAR…ITFPSSYKDA (199 aa)) is the MAGE domain. Serine 1063 bears the Phosphoserine mark. The interval 1118 to 1142 (IDTTDDSTATESASSSVMSPSFSSE) is disordered. The segment covering 1123-1142 (DSTATESASSSVMSPSFSSE) has biased composition (low complexity).

Expressed in testis and in tumors of a wide variety of histologic types.

The protein resides in the cytoplasm. The polypeptide is Melanoma-associated antigen C1 (MAGEC1) (Homo sapiens (Human)).